The primary structure comprises 248 residues: 3-deoxy-manno-octulosonate cytidylyltransferase (248 aa).

It belongs to the KdsB family.

Its subcellular location is the cytoplasm. It catalyses the reaction 3-deoxy-alpha-D-manno-oct-2-ulosonate + CTP = CMP-3-deoxy-beta-D-manno-octulosonate + diphosphate. Its pathway is nucleotide-sugar biosynthesis; CMP-3-deoxy-D-manno-octulosonate biosynthesis; CMP-3-deoxy-D-manno-octulosonate from 3-deoxy-D-manno-octulosonate and CTP: step 1/1. The protein operates within bacterial outer membrane biogenesis; lipopolysaccharide biosynthesis. Activates KDO (a required 8-carbon sugar) for incorporation into bacterial lipopolysaccharide in Gram-negative bacteria. The polypeptide is 3-deoxy-manno-octulosonate cytidylyltransferase (Enterobacter sp. (strain 638)).